A 165-amino-acid chain; its full sequence is C-phycoerythrin class 2 subunit alpha (165 aa).

A phycourobilin-binding site is contributed by cysteine 75. Residues cysteine 83 and cysteine 140 each contribute to the (2R,3E)-phycoerythrobilin site.

The protein belongs to the phycobiliprotein family. As to quaternary structure, heterodimer of an alpha and a beta chain. Post-translationally, contains two covalently linked phycoerythrobilin chromophores and one covalently linked phycourobilin chromophore.

It localises to the cellular thylakoid membrane. Light-harvesting photosynthetic bile pigment-protein from the phycobiliprotein complex. The protein is C-phycoerythrin class 2 subunit alpha (mpeA) of Synechococcus sp. (strain WH8020).